The primary structure comprises 348 residues: Putative agmatine deiminase (348 aa).

The Amidino-cysteine intermediate role is filled by cysteine 335.

This sequence belongs to the agmatine deiminase family.

The enzyme catalyses agmatine + H2O = N-carbamoylputrescine + NH4(+). The chain is Putative agmatine deiminase from Legionella pneumophila subsp. pneumophila (strain Philadelphia 1 / ATCC 33152 / DSM 7513).